Reading from the N-terminus, the 368-residue chain is uncharacterized protein (368 aa).

Disordered regions lie at residues 1–22 and 282–317; these read MEKSSNTTGSGGPKSDSQLPEK and KHLGRRSKKAQKRVEKMKKAYKESKEEKASSQEPPA. The span at 293 to 311 shows a compositional bias: basic and acidic residues; sequence KRVEKMKKAYKESKEEKAS.

This is an uncharacterized protein from Mus musculus (Mouse).